The sequence spans 119 residues: Large ribosomal subunit protein uL18 (119 aa).

The protein belongs to the universal ribosomal protein uL18 family. Part of the 50S ribosomal subunit; part of the 5S rRNA/L5/L18/L25 subcomplex. Contacts the 5S and 23S rRNAs.

Its function is as follows. This is one of the proteins that bind and probably mediate the attachment of the 5S RNA into the large ribosomal subunit, where it forms part of the central protuberance. This chain is Large ribosomal subunit protein uL18, found in Oceanobacillus iheyensis (strain DSM 14371 / CIP 107618 / JCM 11309 / KCTC 3954 / HTE831).